The chain runs to 246 residues: tRNA pseudouridine synthase A (246 aa).

Catalysis depends on aspartate 51, which acts as the Nucleophile. Tyrosine 105 is a binding site for substrate.

Belongs to the tRNA pseudouridine synthase TruA family.

The catalysed reaction is uridine(38/39/40) in tRNA = pseudouridine(38/39/40) in tRNA. Formation of pseudouridine at positions 38, 39 and 40 in the anticodon stem and loop of transfer RNAs. This chain is tRNA pseudouridine synthase A, found in Thermoplasma volcanium (strain ATCC 51530 / DSM 4299 / JCM 9571 / NBRC 15438 / GSS1).